The primary structure comprises 179 residues: Tetratricopeptide repeat protein 36 (179 aa).

TPR repeat units lie at residues 43-76, 78-110, and 115-148; these read SLQL…CPKN, SAYN…AGPK, and CQAY…GSSF.

This sequence belongs to the TTC36 family.

This is Tetratricopeptide repeat protein 36 from Caenorhabditis elegans.